Consider the following 1404-residue polypeptide: DNA-directed RNA polymerase subunit beta' (1404 aa).

4 residues coordinate Zn(2+): cysteine 70, cysteine 72, cysteine 85, and cysteine 88. Mg(2+)-binding residues include aspartate 460, aspartate 462, and aspartate 464. Zn(2+) contacts are provided by cysteine 814, cysteine 888, cysteine 895, and cysteine 898.

Belongs to the RNA polymerase beta' chain family. The RNAP catalytic core consists of 2 alpha, 1 beta, 1 beta' and 1 omega subunit. When a sigma factor is associated with the core the holoenzyme is formed, which can initiate transcription. Mg(2+) serves as cofactor. Zn(2+) is required as a cofactor.

It catalyses the reaction RNA(n) + a ribonucleoside 5'-triphosphate = RNA(n+1) + diphosphate. Functionally, DNA-dependent RNA polymerase catalyzes the transcription of DNA into RNA using the four ribonucleoside triphosphates as substrates. The protein is DNA-directed RNA polymerase subunit beta' of Shewanella piezotolerans (strain WP3 / JCM 13877).